A 154-amino-acid chain; its full sequence is MFDIVLYQPEIPPNTGNIIRLCANTGTRLHLVKPLGFSLEDKQLKRAGLDYHEYANMQVHENWEACCAALAGRRMFALTTKGSARHSTIAFQEGDVFVFGPETRGLPEEIRDQFTPEHRVRLPMMPNNRSLNLSNSAAVLLYEAWRQHDFAGAV.

S-adenosyl-L-methionine contacts are provided by L78, G100, L122, and S130.

It belongs to the class IV-like SAM-binding methyltransferase superfamily. RNA methyltransferase TrmH family. TrmL subfamily. As to quaternary structure, homodimer.

Its subcellular location is the cytoplasm. The catalysed reaction is cytidine(34) in tRNA + S-adenosyl-L-methionine = 2'-O-methylcytidine(34) in tRNA + S-adenosyl-L-homocysteine + H(+). It carries out the reaction 5-carboxymethylaminomethyluridine(34) in tRNA(Leu) + S-adenosyl-L-methionine = 5-carboxymethylaminomethyl-2'-O-methyluridine(34) in tRNA(Leu) + S-adenosyl-L-homocysteine + H(+). In terms of biological role, methylates the ribose at the nucleotide 34 wobble position in the two leucyl isoacceptors tRNA(Leu)(CmAA) and tRNA(Leu)(cmnm5UmAA). Catalyzes the methyl transfer from S-adenosyl-L-methionine to the 2'-OH of the wobble nucleotide. The sequence is that of tRNA (cytidine(34)-2'-O)-methyltransferase from Methylovorus glucosotrophus (strain SIP3-4).